A 193-amino-acid chain; its full sequence is Glycerol-3-phosphate acyltransferase (193 aa).

5 helical membrane passes run Ala-2–Val-22, Gln-51–Ala-71, Gly-78–Phe-98, Val-112–Val-132, and Ile-154–Trp-174.

The protein belongs to the PlsY family. As to quaternary structure, probably interacts with PlsX.

It localises to the cell inner membrane. The enzyme catalyses an acyl phosphate + sn-glycerol 3-phosphate = a 1-acyl-sn-glycero-3-phosphate + phosphate. It functions in the pathway lipid metabolism; phospholipid metabolism. Its function is as follows. Catalyzes the transfer of an acyl group from acyl-phosphate (acyl-PO(4)) to glycerol-3-phosphate (G3P) to form lysophosphatidic acid (LPA). This enzyme utilizes acyl-phosphate as fatty acyl donor, but not acyl-CoA or acyl-ACP. The chain is Glycerol-3-phosphate acyltransferase from Coxiella burnetii (strain CbuK_Q154) (Coxiella burnetii (strain Q154)).